Reading from the N-terminus, the 76-residue chain is U-actitoxin-Avd8c (76 aa).

An N-terminal signal peptide occupies residues 1–16 (LVIVFVVLLGVPLISA). Positions 17–33 (NEEELLAILQDQRNDAR) are excised as a propeptide.

It belongs to the sea anemone 8 toxin family.

Its subcellular location is the secreted. It is found in the nematocyst. The sequence is that of U-actitoxin-Avd8c from Anemonia viridis (Snakelocks anemone).